A 361-amino-acid chain; its full sequence is MERLYYLNHAPIDFHFAQTPRDFVVEEIPLYPFSGAGEHLVLKIRKRNLSTFELVDILSSHLGIKSREIGYAGLKDKSALTLQHLSIPAKFGDKLEAFDHPEVKILEQVRHENKIRIGHLKGNRFFIRLKKLSPLNSLKIQGVLEEIKRWGIPNYFGYQRFGNDGNNHEIGRKIAHGEQRVTSPKRRTFLLSAYQSKLFNEWLKERIKLSKILAEFTPSEASRLAPMIPVEQLKALQKQPHPFKILPGEILHHYPHGKIFVAEDMEEESRRFVEKDIVPAGLLSGTKAKSSEGIAHLYEAPFIDEKIQEQGSRRLAWIFPEDLEYRYIEEEAHGELNFYLPKGSYATVLIEELAHREIKID.

Catalysis depends on D76, which acts as the Nucleophile. Residues 151–318 form the TRUD domain; it reads GIPNYFGYQR…EQGSRRLAWI (168 aa).

It belongs to the pseudouridine synthase TruD family.

It catalyses the reaction uridine(13) in tRNA = pseudouridine(13) in tRNA. Functionally, responsible for synthesis of pseudouridine from uracil-13 in transfer RNAs. The polypeptide is tRNA pseudouridine synthase D (Wolinella succinogenes (strain ATCC 29543 / DSM 1740 / CCUG 13145 / JCM 31913 / LMG 7466 / NCTC 11488 / FDC 602W) (Vibrio succinogenes)).